The following is a 157-amino-acid chain: ATP synthase subunit b (157 aa).

A helical transmembrane segment spans residues 7–27 (LIAQLVVFFILAWFTMKFVWP).

The protein belongs to the ATPase B chain family. F-type ATPases have 2 components, F(1) - the catalytic core - and F(0) - the membrane proton channel. F(1) has five subunits: alpha(3), beta(3), gamma(1), delta(1), epsilon(1). F(0) has three main subunits: a(1), b(2) and c(10-14). The alpha and beta chains form an alternating ring which encloses part of the gamma chain. F(1) is attached to F(0) by a central stalk formed by the gamma and epsilon chains, while a peripheral stalk is formed by the delta and b chains.

Its subcellular location is the cell inner membrane. In terms of biological role, f(1)F(0) ATP synthase produces ATP from ADP in the presence of a proton or sodium gradient. F-type ATPases consist of two structural domains, F(1) containing the extramembraneous catalytic core and F(0) containing the membrane proton channel, linked together by a central stalk and a peripheral stalk. During catalysis, ATP synthesis in the catalytic domain of F(1) is coupled via a rotary mechanism of the central stalk subunits to proton translocation. Functionally, component of the F(0) channel, it forms part of the peripheral stalk, linking F(1) to F(0). The chain is ATP synthase subunit b from Azoarcus sp. (strain BH72).